Reading from the N-terminus, the 186-residue chain is Ribosome-recycling factor (186 aa).

This sequence belongs to the RRF family.

It is found in the cytoplasm. Functionally, responsible for the release of ribosomes from messenger RNA at the termination of protein biosynthesis. May increase the efficiency of translation by recycling ribosomes from one round of translation to another. The sequence is that of Ribosome-recycling factor from Paraburkholderia xenovorans (strain LB400).